The chain runs to 1209 residues: Protein phosphatase 1 regulatory subunit 26 (1209 aa).

Disordered regions lie at residues 57–91 (DGAA…TVHK), 145–279 (SGAA…HRQG), 291–471 (KPPR…VERS), 501–532 (GSDG…DSDD), 555–694 (GESC…EDLD), 733–836 (EQLG…SNDS), 848–1033 (KAKE…FAHQ), 1052–1072 (RGGV…GLPS), and 1118–1209 (AFRE…VVKV). Basic and acidic residues predominate over residues 63-91 (TSDERAAQRGHRAEGCHDARPAAKPTVHK). Positions 201 to 219 (QVGSSKDQGSASPVSVSSD) are enriched in low complexity. A compositionally biased stretch (basic and acidic residues) spans 226–255 (IRAEIEQFLNEKRQHETQKCDGSVEKKPDT). Residues 301 to 321 (QPRSLRSKVTTTQENEGSTKP) are compositionally biased toward polar residues. Low complexity predominate over residues 352–362 (SAAQASEASDS). Residues 442-454 (DTDHAPKLLKETK) are compositionally biased toward basic and acidic residues. 3 stretches are compositionally biased toward basic and acidic residues: residues 609-637 (KMQE…RRDL), 667-685 (KTDE…DKSS), and 757-766 (SKRDSGEGPG). Composition is skewed to low complexity over residues 821–836 (PGSL…SNDS) and 852–861 (SVSSSEVQAE). The residue at position 1161 (Ser1161) is a Phosphoserine. Positions 1187-1209 (GSDASDFSDTSTEDSGGSSVVKV) are enriched in low complexity.

In terms of assembly, interacts with UTP20 and PPP1CA. Ubiquitous in normal tissues. Expressed in numerous adenocarcinoma cell lines.

The protein localises to the nucleus. The protein resides in the nucleolus. Inhibits phosphatase activity of protein phosphatase 1 (PP1) complexes. May positively regulate cell proliferation. The polypeptide is Protein phosphatase 1 regulatory subunit 26 (PPP1R26) (Homo sapiens (Human)).